The sequence spans 879 residues: Prostaglandin F2 receptor negative regulator (879 aa).

The N-terminal stretch at 1–25 is a signal peptide; that stretch reads MGRLASRPLLLALLSLALCRGRVVR. Ig-like C2-type domains are found at residues 26 to 129 and 149 to 268; these read VPTA…ATVQ and PSAR…KAVE. Residues 26–832 lie on the Extracellular side of the membrane; the sequence is VPTATLVRVV…MDVLNAFKYP (807 aa). 2 disulfides stabilise this stretch: Cys43–Cys119 and Cys169–Cys247. A glycan (N-linked (GlcNAc...) asparagine) is linked at Asn44. Thr271 is subject to Phosphothreonine. Ig-like C2-type domains lie at 276–394, 406–536, 544–662, and 688–813; these read PSVL…EAVS, PDYQ…DVFS, ALED…AWSP, and PIFN…AEIH. N-linked (GlcNAc...) asparagine glycosylation is found at Asn286, Asn300, Asn383, and Asn413. Cys299 and Cys373 are oxidised to a cystine. Residues 424-427 carry the Endoplasmic reticulum retention signal motif; sequence PTEL. Residues Cys429 and Cys515 are joined by a disulfide bond. Asn525, Asn600, Asn618, and Asn691 each carry an N-linked (GlcNAc...) asparagine glycan. Cysteines 571 and 655 form a disulfide. A Cell attachment site motif is present at residues 703-705; that stretch reads RGD. A disulfide bridge connects residues Cys711 and Cys793. Residues 833–853 traverse the membrane as a helical segment; sequence LLIGVGLSTVIGLLSCLIGYC. Over 854 to 879 the chain is Cytoplasmic; the sequence is SSHWCCKKEVQETRRERRRLMSMEMD.

Interacts with CD9 and CD81. Part of a complex composed of CD9, CD81 and IGSF8. Also seems to interact with CD63, CD82 and CD151.

It localises to the endoplasmic reticulum membrane. Its subcellular location is the golgi apparatus. The protein localises to the trans-Golgi network membrane. Functionally, inhibits the binding of prostaglandin F2-alpha (PGF2-alpha) to its specific FP receptor, by decreasing the receptor number rather than the affinity constant. Functional coupling with the prostaglandin F2-alpha receptor seems to occur. In myoblasts, associates with tetraspanins CD9 and CD81 to prevent myotube fusion during muscle regeneration. The chain is Prostaglandin F2 receptor negative regulator (PTGFRN) from Homo sapiens (Human).